The chain runs to 241 residues: General transcription factor IIF subunit 2 (241 aa).

This sequence belongs to the TFIIF beta subunit family. In terms of assembly, heterodimer of an alpha and a beta subunit.

It localises to the nucleus. Its function is as follows. TFIIF is a general transcription initiation factor that binds to RNA polymerase II and helps to recruit it to the initiation complex in collaboration with TFIIB. This chain is General transcription factor IIF subunit 2 (gtf2f2), found in Dictyostelium discoideum (Social amoeba).